Reading from the N-terminus, the 491-residue chain is 2,3-bisphosphoglycerate-independent phosphoglycerate mutase (491 aa).

Mn(2+) is bound by residues Asp11 and Ser61. The active-site Phosphoserine intermediate is the Ser61. Substrate contacts are provided by residues His118, 147–148 (RD), Arg177, Arg183, 247–250 (RNDR), and Lys320. 5 residues coordinate Mn(2+): Asp386, His390, Asp427, His428, and His445.

Belongs to the BPG-independent phosphoglycerate mutase family. Monomer. Mn(2+) is required as a cofactor.

The catalysed reaction is (2R)-2-phosphoglycerate = (2R)-3-phosphoglycerate. Its pathway is carbohydrate degradation; glycolysis; pyruvate from D-glyceraldehyde 3-phosphate: step 3/5. In terms of biological role, catalyzes the interconversion of 2-phosphoglycerate and 3-phosphoglycerate. This Helicobacter pylori (strain ATCC 700392 / 26695) (Campylobacter pylori) protein is 2,3-bisphosphoglycerate-independent phosphoglycerate mutase.